Reading from the N-terminus, the 313-residue chain is Olfactory receptor 51A4 (313 aa).

Topologically, residues 1–27 (MSIINTSYVEITTFFLVGMPGLEYAHI) are extracellular. An N-linked (GlcNAc...) asparagine glycan is attached at N5. Residues 28-48 (WISIPICSMYLIAILGNGTIL) form a helical membrane-spanning segment. The Cytoplasmic portion of the chain corresponds to 49 to 56 (FIIKTEPS). The helical transmembrane segment at 57–77 (LHEPMYYFLSMLAMSDLGLSL) threads the bilayer. At 78–101 (SSLPTVLSIFLFNAPEISSNACFA) the chain is on the extracellular side. A disulfide bridge connects residues C99 and C191. The helical transmembrane segment at 102–122 (QEFFIHGFSVLESSVLLIMSF) threads the bilayer. The Cytoplasmic portion of the chain corresponds to 123–141 (DRFLAIHNPLRYTSILTTV). A helical membrane pass occupies residues 142 to 162 (RVAQIGIVFSFKSMLLVLPFP). The Extracellular portion of the chain corresponds to 163–198 (FTLRNLRYCKKNQLSHSYCLHQDVMKLACSDNRIDV). Residues 199–218 (IYGFFGALCLMVDFILIAVS) traverse the membrane as a helical segment. The Cytoplasmic segment spans residues 219–238 (YTLILKTVLGIASKKEQLKA). The chain crosses the membrane as a helical span at residues 239–259 (LNTCVSHICAVIIFYLPIINL). The Extracellular portion of the chain corresponds to 260–274 (AVVHRFARHVSPLIN). The helical transmembrane segment at 275–295 (VLMANVLLLVPPLTNPIVYCV) threads the bilayer. Topologically, residues 296–313 (KTKQIRVRVVAKLCQRKI) are cytoplasmic.

The protein belongs to the G-protein coupled receptor 1 family.

It is found in the cell membrane. Its function is as follows. Odorant receptor. The polypeptide is Olfactory receptor 51A4 (OR51A4) (Homo sapiens (Human)).